The chain runs to 274 residues: Large ribosomal subunit protein uL2 (274 aa).

2 disordered regions span residues 37-59 (KAKN…GGHK) and 222-262 (GAAM…RTNK). Residues 50–59 (TTRHKGGGHK) are compositionally biased toward basic residues.

The protein belongs to the universal ribosomal protein uL2 family. In terms of assembly, part of the 50S ribosomal subunit. Forms a bridge to the 30S subunit in the 70S ribosome.

Its function is as follows. One of the primary rRNA binding proteins. Required for association of the 30S and 50S subunits to form the 70S ribosome, for tRNA binding and peptide bond formation. It has been suggested to have peptidyltransferase activity; this is somewhat controversial. Makes several contacts with the 16S rRNA in the 70S ribosome. The protein is Large ribosomal subunit protein uL2 of Alcanivorax borkumensis (strain ATCC 700651 / DSM 11573 / NCIMB 13689 / SK2).